A 103-amino-acid polypeptide reads, in one-letter code: Cyclotide vibi-K (103 aa).

Positions 1-9 are cleaved as a signal peptide; the sequence is AAFALPAFA. The propeptide occupies 10–69; that stretch reads SFEKDVITPSVLEAVLNRKAPLSNIMMENDAILNVIANVKTVISNPVLEEALLKTNHGVN. The cyclopeptide (Gly-Asn) cross-link spans 70-99; it reads GIPCGESCVWIPCLTSAVGCPCKSKVCYRN. Disulfide bonds link Cys73-Cys89, Cys77-Cys91, and Cys82-Cys96. The propeptide occupies 100–103; it reads SLDN.

In terms of processing, this is a cyclic peptide.

Its function is as follows. Probably participates in a plant defense mechanism. In Viola biflora (Yellow wood violet), this protein is Cyclotide vibi-K.